A 203-amino-acid chain; its full sequence is Small ribosomal subunit protein uS4c (203 aa).

A disordered region spans residues 17 to 39 (TLPGLTTKKSNKLNRPGKDGNTD). The S4 RNA-binding domain maps to 92–164 (MRLDTLCFTL…IKNNQVREIP (73 aa)).

It belongs to the universal ribosomal protein uS4 family. In terms of assembly, part of the 30S ribosomal subunit. Contacts protein S5. The interaction surface between S4 and S5 is involved in control of translational fidelity.

It localises to the plastid. The protein resides in the chloroplast. Functionally, one of the primary rRNA binding proteins, it binds directly to 16S rRNA where it nucleates assembly of the body of the 30S subunit. Its function is as follows. With S5 and S12 plays an important role in translational accuracy. The chain is Small ribosomal subunit protein uS4c (rps4) from Phaeodactylum tricornutum (strain CCAP 1055/1).